The primary structure comprises 191 residues: MRIQTCYFCSSKIYPGHGVQFVRNDCKVFKFCRGKCHKAFKRKKNPRKVGWTKAYRKAAGKELAIDPSFEFEKRRNVPMKYSRETWQKGLEAIKRVTEIKEKRTSHFVMERLRKGRQVEIQMDVKDVQRNMSLIRSPAAGLKQRRAQEAAEEAALMEEDLPEEKITYVDARELEKKLEEGMGVEDLEMLEA.

Ser136 carries the post-translational modification Phosphoserine.

This sequence belongs to the eukaryotic ribosomal protein eL24 family. As to quaternary structure, associated with nucleolar and cytoplasmic pre-60S particles. At the end of biogenesis it dissociates from cytoplasmic pre-60S particles and is likely to be exchanged for its ribosomal homologue, RPL24.

It localises to the nucleus. The protein resides in the nucleolus. In terms of biological role, involved in the biogenesis of the 60S ribosomal subunit. Ensures the docking of NOG1 to pre-60S particles. This chain is Probable ribosome biogenesis protein RLP24 (RpL24-like), found in Drosophila melanogaster (Fruit fly).